A 207-amino-acid chain; its full sequence is MSRYRGPRLKIIRRLRNLPGLTNKLVESKKNQASGSDQSIQKKVSQYCIRLEAKQRLRFNYGLTERQLLNYVRIARCAKGSTGQILLQLLEMRLDNILFRLGVVPTIPSARQLINHRHILVNDRIVDVPSFHCKPKDIITIGAPKIYQSIITKRIESFAKDQIPDHLTLSLSEPKKPKGFVNYLINRESIGLKINELLVVEYYSRKA.

The S4 RNA-binding domain occupies 92–153 (MRLDNILFRL…PKIYQSIITK (62 aa)).

The protein belongs to the universal ribosomal protein uS4 family. In terms of assembly, part of the 30S ribosomal subunit. Contacts protein S5. The interaction surface between S4 and S5 is involved in control of translational fidelity.

The protein localises to the plastid. It localises to the chloroplast. Functionally, one of the primary rRNA binding proteins, it binds directly to 16S rRNA where it nucleates assembly of the body of the 30S subunit. Its function is as follows. With S5 and S12 plays an important role in translational accuracy. The chain is Small ribosomal subunit protein uS4c (rps4) from Equisetum bogotense (Horsetail).